A 187-amino-acid chain; its full sequence is MSAKQGWEKKSTNIDIASRKGMNVNNLSEHLQNLISSDSELGSRLLSLLLVSSGNAEELISMINNGQDVSQFKKLREPRKGKVAATTAVVVKEEEAPVSTSNELDKIKQERRRKNTEASQRFRIRKKQKNFENMNKLQNLNTQINKLRDRIEQLNKENEFWKAKLNDINEIKSLKLLNDIKRRNMGR.

One can recognise a bZIP domain in the interval 105 to 168 (DKIKQERRRK…EFWKAKLNDI (64 aa)). The segment at 106–136 (KIKQERRRKNTEASQRFRIRKKQKNFENMNK) is basic motif. Residues 137-151 (LQNLNTQINKLRDRI) are leucine-zipper.

The protein belongs to the bZIP family. As to quaternary structure, interacts with MET4 to form a heteromeric complex which also includes CBF1. Forms two alternate complexes associating MET28 with MET4 and either MET31 or MET32. Binds to DNA through the MET4-MET28-CBF1 complex.

The protein localises to the cytoplasm. It is found in the nucleus. Acts as an accessory factor in the activation of sulfur amino acids metabolism genes. Possesses no intrinsic transcription activation abilities. Binds to the MET16 promoter as a complex with MET4 and CBF1. Enhances the DNA-binding activity of CBF1. The sequence is that of Transcriptional activator of sulfur metabolism MET28 (MET28) from Saccharomyces cerevisiae (strain ATCC 204508 / S288c) (Baker's yeast).